Reading from the N-terminus, the 129-residue chain is Small ribosomal subunit protein uS11 (129 aa).

Belongs to the universal ribosomal protein uS11 family. As to quaternary structure, part of the 30S ribosomal subunit. Interacts with proteins S7 and S18. Binds to IF-3.

Its function is as follows. Located on the platform of the 30S subunit, it bridges several disparate RNA helices of the 16S rRNA. Forms part of the Shine-Dalgarno cleft in the 70S ribosome. The polypeptide is Small ribosomal subunit protein uS11 (Levilactobacillus brevis (strain ATCC 367 / BCRC 12310 / CIP 105137 / JCM 1170 / LMG 11437 / NCIMB 947 / NCTC 947) (Lactobacillus brevis)).